The primary structure comprises 361 residues: Phosphoserine aminotransferase (361 aa).

Arg-42 is a binding site for L-glutamate. Pyridoxal 5'-phosphate is bound by residues 76–77 (AT), Trp-102, Thr-152, Asp-172, and Gln-195. At Lys-196 the chain carries N6-(pyridoxal phosphate)lysine. Pyridoxal 5'-phosphate is bound at residue 237–238 (NT).

The protein belongs to the class-V pyridoxal-phosphate-dependent aminotransferase family. SerC subfamily. Homodimer. The cofactor is pyridoxal 5'-phosphate.

Its subcellular location is the cytoplasm. It carries out the reaction O-phospho-L-serine + 2-oxoglutarate = 3-phosphooxypyruvate + L-glutamate. The catalysed reaction is 4-(phosphooxy)-L-threonine + 2-oxoglutarate = (R)-3-hydroxy-2-oxo-4-phosphooxybutanoate + L-glutamate. Its pathway is amino-acid biosynthesis; L-serine biosynthesis; L-serine from 3-phospho-D-glycerate: step 2/3. The protein operates within cofactor biosynthesis; pyridoxine 5'-phosphate biosynthesis; pyridoxine 5'-phosphate from D-erythrose 4-phosphate: step 3/5. Catalyzes the reversible conversion of 3-phosphohydroxypyruvate to phosphoserine and of 3-hydroxy-2-oxo-4-phosphonooxybutanoate to phosphohydroxythreonine. This chain is Phosphoserine aminotransferase, found in Xanthomonas campestris pv. campestris (strain B100).